We begin with the raw amino-acid sequence, 164 residues long: Cytochrome c-type biogenesis protein CcmE (164 aa).

The Cytoplasmic portion of the chain corresponds to 1 to 8 (MNPRRKSR). A helical; Signal-anchor for type II membrane protein membrane pass occupies residues 9 to 29 (LYLAMVVLIGISLTTTLVLYA). The Periplasmic segment spans residues 30–164 (LRSNIDLFYT…RGTNTTGNAL (135 aa)). His-130 and Tyr-134 together coordinate heme. Positions 140–164 (EEAMKENHSRPAAAYRGTNTTGNAL) are disordered.

It belongs to the CcmE/CycJ family.

The protein resides in the cell inner membrane. Functionally, heme chaperone required for the biogenesis of c-type cytochromes. Transiently binds heme delivered by CcmC and transfers the heme to apo-cytochromes in a process facilitated by CcmF and CcmH. This is Cytochrome c-type biogenesis protein CcmE from Yersinia pseudotuberculosis serotype O:3 (strain YPIII).